A 129-amino-acid polypeptide reads, in one-letter code: Small ribosomal subunit protein uS11 (129 aa).

It belongs to the universal ribosomal protein uS11 family. Part of the 30S ribosomal subunit. Interacts with proteins S7 and S18. Binds to IF-3.

Functionally, located on the platform of the 30S subunit, it bridges several disparate RNA helices of the 16S rRNA. Forms part of the Shine-Dalgarno cleft in the 70S ribosome. The protein is Small ribosomal subunit protein uS11 of Aeromonas hydrophila subsp. hydrophila (strain ATCC 7966 / DSM 30187 / BCRC 13018 / CCUG 14551 / JCM 1027 / KCTC 2358 / NCIMB 9240 / NCTC 8049).